The primary structure comprises 90 residues: UPF0298 protein SSU05_1549 (90 aa).

This sequence belongs to the UPF0298 family.

It localises to the cytoplasm. The sequence is that of UPF0298 protein SSU05_1549 from Streptococcus suis (strain 05ZYH33).